Here is a 316-residue protein sequence, read N- to C-terminus: 4-hydroxy-3-methylbut-2-enyl diphosphate reductase (316 aa).

A [4Fe-4S] cluster-binding site is contributed by Cys12. Residues His41 and His74 each coordinate (2E)-4-hydroxy-3-methylbut-2-enyl diphosphate. His41 and His74 together coordinate dimethylallyl diphosphate. Positions 41 and 74 each coordinate isopentenyl diphosphate. Residue Cys96 participates in [4Fe-4S] cluster binding. His124 is a binding site for (2E)-4-hydroxy-3-methylbut-2-enyl diphosphate. Residue His124 participates in dimethylallyl diphosphate binding. An isopentenyl diphosphate-binding site is contributed by His124. Glu126 serves as the catalytic Proton donor. Position 167 (Thr167) interacts with (2E)-4-hydroxy-3-methylbut-2-enyl diphosphate. Cys197 is a [4Fe-4S] cluster binding site. Residues Ser225, Ser226, Asn227, and Ser269 each contribute to the (2E)-4-hydroxy-3-methylbut-2-enyl diphosphate site. Dimethylallyl diphosphate contacts are provided by Ser225, Ser226, Asn227, and Ser269. Isopentenyl diphosphate is bound by residues Ser225, Ser226, Asn227, and Ser269.

It belongs to the IspH family. Homodimer. The cofactor is [4Fe-4S] cluster.

The catalysed reaction is isopentenyl diphosphate + 2 oxidized [2Fe-2S]-[ferredoxin] + H2O = (2E)-4-hydroxy-3-methylbut-2-enyl diphosphate + 2 reduced [2Fe-2S]-[ferredoxin] + 2 H(+). It carries out the reaction dimethylallyl diphosphate + 2 oxidized [2Fe-2S]-[ferredoxin] + H2O = (2E)-4-hydroxy-3-methylbut-2-enyl diphosphate + 2 reduced [2Fe-2S]-[ferredoxin] + 2 H(+). It participates in isoprenoid biosynthesis; dimethylallyl diphosphate biosynthesis; dimethylallyl diphosphate from (2E)-4-hydroxy-3-methylbutenyl diphosphate: step 1/1. The protein operates within isoprenoid biosynthesis; isopentenyl diphosphate biosynthesis via DXP pathway; isopentenyl diphosphate from 1-deoxy-D-xylulose 5-phosphate: step 6/6. In terms of biological role, catalyzes the conversion of 1-hydroxy-2-methyl-2-(E)-butenyl 4-diphosphate (HMBPP) into a mixture of isopentenyl diphosphate (IPP) and dimethylallyl diphosphate (DMAPP). Acts in the terminal step of the DOXP/MEP pathway for isoprenoid precursor biosynthesis. The protein is 4-hydroxy-3-methylbut-2-enyl diphosphate reductase of Pectobacterium atrosepticum (strain SCRI 1043 / ATCC BAA-672) (Erwinia carotovora subsp. atroseptica).